Consider the following 207-residue polypeptide: Outer-membrane lipoprotein LolB (207 aa).

An N-terminal signal peptide occupies residues 1–21 (MTLPDFRLIRLLPLASLVLTA). Cys-22 carries N-palmitoyl cysteine lipidation. Cys-22 carries the S-diacylglycerol cysteine lipid modification.

This sequence belongs to the LolB family. In terms of assembly, monomer.

It localises to the cell outer membrane. Functionally, plays a critical role in the incorporation of lipoproteins in the outer membrane after they are released by the LolA protein. The sequence is that of Outer-membrane lipoprotein LolB from Salmonella arizonae (strain ATCC BAA-731 / CDC346-86 / RSK2980).